Here is a 230-residue protein sequence, read N- to C-terminus: Flagellar L-ring protein (230 aa).

A signal peptide spans 1 to 18; that stretch reads MNRLNIAVSCLATALLFG. Cys-19 is lipidated: N-palmitoyl cysteine. Residue Cys-19 is the site of S-diacylglycerol cysteine attachment.

Belongs to the FlgH family. In terms of assembly, the basal body constitutes a major portion of the flagellar organelle and consists of four rings (L,P,S, and M) mounted on a central rod.

It is found in the cell outer membrane. Its subcellular location is the bacterial flagellum basal body. Assembles around the rod to form the L-ring and probably protects the motor/basal body from shearing forces during rotation. This is Flagellar L-ring protein from Legionella pneumophila (strain Corby).